The chain runs to 112 residues: Transmembrane protein 14C (112 aa).

Transmembrane regions (helical) follow at residues 7 to 27 (VVPL…GGII), 32 to 52 (AGSV…GLGA), 62 to 82 (VWVF…RFYH), and 88 to 108 (PAGL…VSMF).

This sequence belongs to the TMEM14 family.

It localises to the mitochondrion membrane. In terms of biological role, required for normal heme biosynthesis. The sequence is that of Transmembrane protein 14C (TMEM14C) from Homo sapiens (Human).